The chain runs to 343 residues: S-adenosylmethionine:tRNA ribosyltransferase-isomerase (343 aa).

Belongs to the QueA family. In terms of assembly, monomer.

The protein localises to the cytoplasm. It catalyses the reaction 7-aminomethyl-7-carbaguanosine(34) in tRNA + S-adenosyl-L-methionine = epoxyqueuosine(34) in tRNA + adenine + L-methionine + 2 H(+). It functions in the pathway tRNA modification; tRNA-queuosine biosynthesis. Functionally, transfers and isomerizes the ribose moiety from AdoMet to the 7-aminomethyl group of 7-deazaguanine (preQ1-tRNA) to give epoxyqueuosine (oQ-tRNA). This chain is S-adenosylmethionine:tRNA ribosyltransferase-isomerase, found in Borreliella burgdorferi (strain ATCC 35210 / DSM 4680 / CIP 102532 / B31) (Borrelia burgdorferi).